A 294-amino-acid polypeptide reads, in one-letter code: MPVVTMRQLLDSGVHFGHQTRRWNPKMKRFIFTERNGIYIIDLQQSLSYIDRAYEFVKATVAHGGTVLFVGTKKQAQESIAEQATRVGQPYVNQRWLGGMLTNFQTVSKRIQRMKELEEIDFDDVAGSAYTKKELLLLRRELTKLETNLGGIRNLTKAPSVLWIVDTKKEHLAVDEAKKLNIPVVAILDTNCDPDEVDFPIPGNDDAIRSVNLLTRVVADAVAEGLIARNQRATGTTEAPEEPLAEWERELLEGSKSEEAAAPAAAEEAPAAAEEAPAAAEATESAAGEADAAK.

Positions 232–294 are disordered; sequence RATGTTEAPE…SAAGEADAAK (63 aa). The span at 246–259 shows a compositional bias: basic and acidic residues; that stretch reads EWERELLEGSKSEE. A compositionally biased stretch (low complexity) spans 260-294; it reads AAAPAAAEEAPAAAEEAPAAAEATESAAGEADAAK.

It belongs to the universal ribosomal protein uS2 family.

The polypeptide is Small ribosomal subunit protein uS2 (Arthrobacter sp. (strain FB24)).